A 1213-amino-acid chain; its full sequence is Protein jagged-1b (1213 aa).

An N-terminal signal peptide occupies residues 1-26 (MILRRSSVFSAFYLHAFLLCLRTTVS). Topologically, residues 27–1064 (DASGHFELEI…HQIPSPKTDY (1038 aa)) are extracellular. N139 is a glycosylation site (N-linked (GlcNAc...) asparagine). A DSL domain is found at 182-226 (VTCLEHYYGFGCNKFCRPRDEFFGHYTCDQNGNKTCLEGWTGPDC). Disulfide bonds link C184–C193 and C197–C209. N-linked (GlcNAc...) asparagine glycosylation is present at N214. 39 disulfides stabilise this stretch: C217–C226, C231–C242, C235–C248, C250–C259, C262–C273, C268–C279, C281–C290, C297–C309, C303–C319, C321–C330, C337–C348, C342–C357, C359–C368, C375–C386, C380–C395, C397–C406, C413–C424, C418–C433, C435–C444, C451–C461, C455–C470, C472–C481, C488–C499, C493–C508, C510–C519, C526–C537, C531–C546, C548–C557, C596–C612, C614–C623, C630–C641, C635–C650, C652–C661, C668–C679, C673–C688, C690–C699, C706–C717, C711–C726, and C728–C737. The EGF-like 1 domain maps to 227-260 (NTAICRQGCSTEHGSCKQPGGCKCLYGWQGPYCD). Positions 261–291 (KCIPHPGCVHGTCVEPWQCLCDTNWGGQLCD) constitute an EGF-like 2; atypical domain. 2 consecutive EGF-like domains span residues 293 to 331 (DLNY…VNCE) and 333 to 369 (AEHA…TSCE). The EGF-like 5; calcium-binding domain maps to 371–407 (NVDDCTPNQCKHGGTCQDLVNGFKCACPPHWTGKTCQ). The EGF-like 6; calcium-binding domain maps to 409-445 (DANECEDKPCVNAKSCHNLIGAYFCECLPGWSGQNCD). The region spanning 447 to 482 (NINDCKGQCLNGGTCKDLVNGYRCLCPPGYTGEQCE) is the EGF-like 7; calcium-binding domain. The EGF-like 8; calcium-binding domain maps to 484-520 (DVDECASSPCLNGGRCQDEVNGFQCLCPAGFSGQLCQ). EGF-like domains lie at 522–558 (DIDY…KNCS) and 592–624 (SSNV…TYCH). A glycan (N-linked (GlcNAc...) asparagine) is linked at N556. The region spanning 626–662 (NINDCESNPCRNGGTCIDKVNVYQCICADGWEGVHCE) is the EGF-like 11; calcium-binding domain. The 37-residue stretch at 664-700 (NIDDCSLNPCLNKGACQDLVNDFYCECRNGWKGKTCH) folds into the EGF-like 12; calcium-binding domain. In terms of domain architecture, EGF-like 13 spans 702–738 (RDSQCDEATCNNGGTCHDEGDTFKCRCSPGWEGATCN). The N-linked (GlcNAc...) asparagine glycan is linked to N742. 9 cysteine pairs are disulfide-bonded: C745–C756, C750–C765, C767–C776, C783–C794, C788–C803, C805–C814, C821–C832, C826–C841, and C843–C852. Residues 746–777 (LPNPCENGGTCVVNGDSFNCVCKEGWEGSTCT) enclose the EGF-like 14 domain. Residues 779-815 (NTNDCNPHPCYNSGTCVDGENWYRCECAPGFAGPDCR) form the EGF-like 15; calcium-binding domain. The EGF-like 16; calcium-binding domain occupies 817–853 (NINECQSSPCAFGSTCVDEINGYRCLCPPGRIGPDCQ). Residues 860 to 914 (CIANGQVTADGAKWEEDCNICQCQNGRIHCTMMWCGPKSCRIGKARGGCPASQSC) form the VWFC domain. Residues 918 to 956 (KEEQCFVKPCPSLGECWPSAPPPPSKCHASFSYQDDSCA) enclose the EGF-like 17 domain. 3 N-linked (GlcNAc...) asparagine glycosylation sites follow: N957, N988, and N1042. A helical transmembrane segment spans residues 1065–1087 (LVPLLSSIFIVLWIFALASAFLW). At 1088–1213 (CIHRRRKQNT…QSLNRMEYIV (126 aa)) the chain is on the cytoplasmic side. The disordered stretch occupies residues 1181–1202 (EERAPNKNPNWTNKQDNRDLET).

It localises to the membrane. The protein localises to the cell membrane. Ligand for Notch receptors and involved in the mediation of Notch signaling. Seems to be involved in cell-fate decisions. The sequence is that of Protein jagged-1b (jag1b) from Danio rerio (Zebrafish).